A 69-amino-acid chain; its full sequence is Large ribosomal subunit protein uL29 (69 aa).

Belongs to the universal ribosomal protein uL29 family.

In Methylobacillus flagellatus (strain ATCC 51484 / DSM 6875 / VKM B-1610 / KT), this protein is Large ribosomal subunit protein uL29.